Consider the following 1145-residue polypeptide: MPPPRTREGRGHRDRDHHRAPREEEAPEKWDWNCPETRCLLEDVFFRDEDYIRRGSEECQKFWAFFERLQRFQHLKTSQKKKKDPGMPKHGIAALADLPLTYDPRYRINLSILSPDTRGRHGPGRGLPPERVSEFRRALLHYLDFQQKQAFGRLAKLQRERAALPIAQYGNRILQTLKEHQVVVVAGDTGCGKSTQVPQYLLAAGFSHVACTQPRRIACISLAKRVGFESLSQYGSQVGYQIRFESTRSAATKIVFLTVGLLLRQIQREPSLPQYQVLIVDEVHERHLHNDFLLGVLQRLLPQRPDLKVILMSATINISLFSSYFSHAPVVQVPGRLFPITVVYQPQEADQTASKSEKLDPRPFLRVLEAIDNKYPPEERGDLLVFLSGMAEITTVLDAAQAYASLTQRWVVLPLHSALSVSDQDKVFDVAPAGVRKCILSTNIAETSVTIDGIRFVVDSGKVKEMSYDPQAKLQRLQEFWISQASAEQRKGRAGRTGPGVCYRLYAESDYDAFAPYPVPEIRRVALDALVLQMKSMSVGDPRTFPFIEPPPPASVETAILYLQEQGALDSSEALTPIGSLLAQLPVDVVIGKMLILGSMFSLAEPVLTIAAALSVQSPFTRSAQSNLDCATARRPLESDQGDPFTLFNVFNAWVQVKSERSGNSRKWCRRRGVEEHRLYEMANLRRQFKELLEDHGLLSGAQVVAPGDSYSRLQQRRERRALHQLKRQHEEGGGRRRKVLRLQEDGCSSDEEDRKGSTSQRADSVDIQDVKFKLRHNLEQLQAAASSAQDLTRDQLALLKLVLGRGLYPQLAVPDAFNSGRKDSDQIFHTQAKQGTVLHPTCVFANSPEVLHTQGQEASGQEGSQDGRDQMSCKHQLLAFVSLLETNKPYLVNCVRIPALQSLLLFSRSIDTNGDCSRLVADGWLELQLADSESAVRLLATSLRLRAHWESALDRQLARQAQRRKLEQEEDVGSPAVSPQEVAALSRELLQFMAAKVPYRLRRLTGLEAQNLYVGPQTITTAPSLPGLFGNSTLSPHPTKGGYAVSDYLTYNCLTSDTDLYSDCLRSFWTCPHCGLHMPFTPLERIAHENTCPEAPGDDPGSEEAAPAPPQKTSALQRPYHCQVCGQDFLFTPTEVLRHRRQHV.

The span at 1–14 (MPPPRTREGRGHRD) shows a compositional bias: basic and acidic residues. Residues 1–27 (MPPPRTREGRGHRDRDHHRAPREEEAP) form a disordered region. Residues 174-334 (LQTLKEHQVV…FSHAPVVQVP (161 aa)) form the Helicase ATP-binding domain. 187 to 194 (GDTGCGKS) contributes to the ATP binding site. A DEAH box motif is present at residues 281-284 (DEVH). Residues 370–538 (AIDNKYPPEE…ALVLQMKSMS (169 aa)) enclose the Helicase C-terminal domain. Disordered stretches follow at residues 726–764 (LKRQHEEGGGRRRKVLRLQEDGCSSDEEDRKGSTSQRAD) and 1091–1114 (NTCPEAPGDDPGSEEAAPAPPQKT). Phosphoserine is present on residues serine 749 and serine 750.

It belongs to the DEAD box helicase family. DEAH subfamily. As to quaternary structure, forms a complex with RUVBL1 and RUVBL2. Part of a complex composed of SMG1, DHX34 and UPF1; within the complex DHX34 acts as a scaffolding protein to facilitate SMG1 phosphorylation of UPF1. Interacts with UPF1, MOV10, EIF4A3, XRN2, SMG6, SMG7, SMG9, UPF3A, UPF3B, CASC3/MLN51, XRN1, DIS3 and DCP1A; the interactions are RNA-independent. Interacts with NCBP1/CPB80; the interaction is RNA-dependent. Interacts (via C-terminus) with SMG1; the interaction is RNA-independent.

The enzyme catalyses ATP + H2O = ADP + phosphate + H(+). Functionally, probable ATP-binding RNA helicase. Required for nonsense-mediated decay (NMD) degradation of mRNA transcripts containing premature stop codons. Promotes the phosphorylation of UPF1 along with its interaction with key NMD pathway proteins UPF2 and EIF4A3. Negatively regulates the nucleotide binding ability and ATP hydrolysis of the RUVBL1-RUVBL2 complex via induction of N-terminus conformation changes of the RUVBL2 subunits. This Mus musculus (Mouse) protein is Probable ATP-dependent RNA helicase DHX34.